A 103-amino-acid polypeptide reads, in one-letter code: Preprofallaxidin-6 (103 aa).

An N-terminal signal peptide occupies residues 1 to 22 (MASLKKSLFLVLFLGFVSLSIC). Residues 23–49 (EEEKRENEGNENEEEDENHEEGSEEKR) constitute a propeptide that is removed on maturation. The interval 24–50 (EEKRENEGNENEEEDENHEEGSEEKRG) is disordered. Residues 31–41 (GNENEEEDENH) show a composition bias toward acidic residues. Leu65 carries the leucine amide modification. The disordered stretch occupies residues 67-103 (KRSEEKRYHPFGKRSEEKRYHPFGKRSEEKRYPPIGK). Positions 69 to 73 (SEEKR) are excised as a propeptide. Residue Phe77 is modified to Phenylalanine amide. Positions 81–85 (SEEKR) are excised as a propeptide. Phe89 is subject to Phenylalanine amide. The propeptide occupies 93–97 (SEEKR). At Ile101 the chain carries Isoleucine amide.

This sequence belongs to the frog skin active peptide (FSAP) family. Brevinin subfamily. As to expression, expressed by the skin glands.

It localises to the secreted. In terms of biological role, fallaxidin-1.3 shows no antibacterial activity against Gram-positive or Gram-negative bacteria. Does not inhibit the formation of NO by neuronal nitric oxide synthase. Has no effect on splenocyte proliferation or smooth muscle contraction. Fallaxidin-1.4 shows no antibacterial activity against Gram-positive or Gram-negative bacteria. Does not inhibit the formation of NO by neuronal nitric oxide synthase. Has no effect on splenocyte proliferation or smooth muscle contraction. Its function is as follows. Fallaxidin-3.1 shows antibacterial activity against the Gram-positive bacteria E.faecalis (MIC=100 uM) and L.lactis (MIC=100 uM). No antibacterial activity against the Gram-positive bacteria B.cereus, L.innocua, M.luteus, S.epidermidis, S.uberis and S.aureus, or the Gram-negative bacteria E.cloacae and E.coli. The polypeptide is Preprofallaxidin-6 (Litoria fallax (Eastern dwarf tree frog)).